Reading from the N-terminus, the 121-residue chain is Fluoride-specific ion channel FluC 2 (121 aa).

Helical transmembrane passes span 3-23 (YLFV…LSTL), 27-47 (SGLP…MGYL), 64-84 (GVTT…FELV), and 92-112 (IALL…FCWF). Residues glycine 71 and threonine 74 each contribute to the Na(+) site.

This sequence belongs to the fluoride channel Fluc/FEX (TC 1.A.43) family.

The protein localises to the cell membrane. It catalyses the reaction fluoride(in) = fluoride(out). Na(+) is not transported, but it plays an essential structural role and its presence is essential for fluoride channel function. In terms of biological role, fluoride-specific ion channel. Important for reducing fluoride concentration in the cell, thus reducing its toxicity. This Staphylococcus haemolyticus (strain JCSC1435) protein is Fluoride-specific ion channel FluC 2.